The following is a 288-amino-acid chain: 4-diphosphocytidyl-2-C-methyl-D-erythritol kinase (288 aa).

Residue K22 is part of the active site. ATP is bound at residue 104-114; that stretch reads PSQAGLGGGSS. D146 is a catalytic residue.

It belongs to the GHMP kinase family. IspE subfamily.

It catalyses the reaction 4-CDP-2-C-methyl-D-erythritol + ATP = 4-CDP-2-C-methyl-D-erythritol 2-phosphate + ADP + H(+). The protein operates within isoprenoid biosynthesis; isopentenyl diphosphate biosynthesis via DXP pathway; isopentenyl diphosphate from 1-deoxy-D-xylulose 5-phosphate: step 3/6. In terms of biological role, catalyzes the phosphorylation of the position 2 hydroxy group of 4-diphosphocytidyl-2C-methyl-D-erythritol. In Protochlamydia amoebophila (strain UWE25), this protein is 4-diphosphocytidyl-2-C-methyl-D-erythritol kinase.